Reading from the N-terminus, the 150-residue chain is MHETRIVVGPAPFSVGEEYSWLAARDEDGAVVTFTGKVRNHNLGDSVKALTLEHYPGMTEKALAEIVAKARSRWPLGRVTVIHRVGELWPGDEIVFVGVTSAHRSSAFDAGQFIMDYLKTRAPFWKREATPEGDRWVEARDSDQQLAKRW.

Residues 37 to 39 (KVR), 103 to 104 (HR), Lys-119, and 126 to 128 (KRE) each bind substrate.

It belongs to the MoaE family. In terms of assembly, heterotetramer of 2 MoaD subunits and 2 MoaE subunits. Also stable as homodimer. The enzyme changes between these two forms during catalysis.

The enzyme catalyses 2 [molybdopterin-synthase sulfur-carrier protein]-C-terminal-Gly-aminoethanethioate + cyclic pyranopterin phosphate + H2O = molybdopterin + 2 [molybdopterin-synthase sulfur-carrier protein]-C-terminal Gly-Gly + 2 H(+). It functions in the pathway cofactor biosynthesis; molybdopterin biosynthesis. Its function is as follows. Converts molybdopterin precursor Z into molybdopterin. This requires the incorporation of two sulfur atoms into precursor Z to generate a dithiolene group. The sulfur is provided by MoaD. The chain is Molybdopterin synthase catalytic subunit (moaE) from Salmonella typhi.